Here is an 89-residue protein sequence, read N- to C-terminus: Large ribosomal subunit protein bL27 (89 aa).

Belongs to the bacterial ribosomal protein bL27 family.

This chain is Large ribosomal subunit protein bL27, found in Afipia carboxidovorans (strain ATCC 49405 / DSM 1227 / KCTC 32145 / OM5) (Oligotropha carboxidovorans).